A 167-amino-acid polypeptide reads, in one-letter code: Putative NADH-quinone oxidoreductase subunit B 2 (167 aa).

It belongs to the complex I 20 kDa subunit family. In terms of assembly, NDH-1 is composed of 14 different subunits. Subunits NuoB, C, D, E, F, and G constitute the peripheral sector of the complex.

It is found in the cell inner membrane. The enzyme catalyses a quinone + NADH + 5 H(+)(in) = a quinol + NAD(+) + 4 H(+)(out). Its function is as follows. NDH-1 shuttles electrons from NADH, via FMN and iron-sulfur (Fe-S) centers, to quinones in the respiratory chain. Couples the redox reaction to proton translocation (for every two electrons transferred, four hydrogen ions are translocated across the cytoplasmic membrane), and thus conserves the redox energy in a proton gradient. This chain is Putative NADH-quinone oxidoreductase subunit B 2, found in Burkholderia pseudomallei (strain 1710b).